Here is a 216-residue protein sequence, read N- to C-terminus: LexA repressor (216 aa).

Residues 28-48 (RAEIAAEFGFSSPNAAEEHLR) constitute a DNA-binding region (H-T-H motif). Residues Ser-134 and Lys-171 each act as for autocatalytic cleavage activity in the active site.

Belongs to the peptidase S24 family. Homodimer.

It catalyses the reaction Hydrolysis of Ala-|-Gly bond in repressor LexA.. Represses a number of genes involved in the response to DNA damage (SOS response), including recA and lexA. In the presence of single-stranded DNA, RecA interacts with LexA causing an autocatalytic cleavage which disrupts the DNA-binding part of LexA, leading to derepression of the SOS regulon and eventually DNA repair. In Ralstonia nicotianae (strain ATCC BAA-1114 / GMI1000) (Ralstonia solanacearum), this protein is LexA repressor.